The sequence spans 94 residues: Integration host factor subunit beta (94 aa).

The protein belongs to the bacterial histone-like protein family. As to quaternary structure, heterodimer of an alpha and a beta chain.

Its function is as follows. This protein is one of the two subunits of integration host factor, a specific DNA-binding protein that functions in genetic recombination as well as in transcriptional and translational control. The protein is Integration host factor subunit beta (ihfB) of Pasteurella multocida (strain Pm70).